A 513-amino-acid polypeptide reads, in one-letter code: Nitrate transporter 2.2 (513 aa).

Helical transmembrane passes span W38–I58, V74–V94, Y98–T118, F128–F148, A158–I178, A196–I216, L247–V265, F281–F301, L323–V343, I351–I371, V383–F403, and F419–P439.

It belongs to the major facilitator superfamily. Nitrate/nitrite porter (TC 2.A.1.8) family.

It is found in the cell membrane. In terms of biological role, involved in nitrate transport, but does not seem to be able to mediate transport by its own. Acts as a dual component transporter with NAR2 (system 2). Involved in a high affinity transport specific for nitrate. The protein is Nitrate transporter 2.2 of Chlamydomonas reinhardtii (Chlamydomonas smithii).